The chain runs to 427 residues: Probable anaerobic glycerol-3-phosphate dehydrogenase subunit B (427 aa).

It belongs to the anaerobic G-3-P dehydrogenase subunit B family. FMN is required as a cofactor.

The catalysed reaction is a quinone + sn-glycerol 3-phosphate = dihydroxyacetone phosphate + a quinol. It functions in the pathway polyol metabolism; glycerol degradation via glycerol kinase pathway; glycerone phosphate from sn-glycerol 3-phosphate (anaerobic route): step 1/1. This is Probable anaerobic glycerol-3-phosphate dehydrogenase subunit B from Halobacterium salinarum (strain ATCC 29341 / DSM 671 / R1).